A 205-amino-acid polypeptide reads, in one-letter code: Non-structural protein NS3 (205 aa).

The disordered stretch occupies residues 177 to 205 (GTRSPETGCRKVTSGLPHGASGGSGTRQG). Residues 196–205 (ASGGSGTRQG) show a composition bias toward gly residues.

The protein belongs to the orbivirus NS3 family.

In terms of biological role, may play a role in the release of virions from infected cells. This Broadhaven virus (BRD) protein is Non-structural protein NS3 (Segment-10).